Consider the following 83-residue polypeptide: Small ribosomal subunit protein uS17 (83 aa).

Belongs to the universal ribosomal protein uS17 family. In terms of assembly, part of the 30S ribosomal subunit.

One of the primary rRNA binding proteins, it binds specifically to the 5'-end of 16S ribosomal RNA. This Chlamydia trachomatis serovar L2 (strain ATCC VR-902B / DSM 19102 / 434/Bu) protein is Small ribosomal subunit protein uS17.